Reading from the N-terminus, the 249-residue chain is Probable transcriptional regulatory protein FN1661 (249 aa).

Positions Met-1 to Ile-10 are enriched in polar residues. The tract at residues Met-1 to Lys-20 is disordered.

This sequence belongs to the TACO1 family.

It localises to the cytoplasm. The sequence is that of Probable transcriptional regulatory protein FN1661 from Fusobacterium nucleatum subsp. nucleatum (strain ATCC 25586 / DSM 15643 / BCRC 10681 / CIP 101130 / JCM 8532 / KCTC 2640 / LMG 13131 / VPI 4355).